A 532-amino-acid chain; its full sequence is MELPVPQKLPDPPRSFDEFLKSQNWDYWPRDVHFRDSDIWEDTLKKLEEAISYTSIYSYLWTNVPRLYDIVDSLESKLKESSHLLQHHASRLFESDKMISKKRSYTNLERYKAFVKEHYRPKKIALSDRMETEKNIEGCTFLFNQNEVTQLPRHLDAKQIYLYVLKTHNFEEKVFKVWKTHVLSDCSIALLHDSFWWWFLHKFKPDKRDEDFLFDRIAESYVTLFIKIPLRRKDAFFKMYPDCLTQAVYTTFQESFPESCSLFNDKFKEDLGNTIFLWLSGLKPETGFWTHWKLQDLCTTTIHGSRRVPVKLRRSVIPSQEHIPGIRDLKIEDILKNPRAYAMPKLMKESVASKAATKPSHYRSLGPEFHKVLFDFGGQSPLILYYLKMHELGGISVTHNPKGTKFTKILREPSPAPTYCDIIRDAKRKFADNKKDFKRVKQRIKDDIKFLREQQELIDKELDRIQAKASKNLQEVKNEFENFLHKQRVEAKLKEEYGGSTSASESPQSMQSPQSSSSFPTISEDFNNVEEG.

Positions 432 to 482 form a coiled coil; that stretch reads DNKKDFKRVKQRIKDDIKFLREQQELIDKELDRIQAKASKNLQEVKNEFEN. A disordered region spans residues 494 to 532; it reads KEEYGGSTSASESPQSMQSPQSSSSFPTISEDFNNVEEG. The segment covering 500–523 has biased composition (low complexity); the sequence is STSASESPQSMQSPQSSSSFPTIS.

It belongs to the FAM227 family.

This Mus musculus (Mouse) protein is Protein FAM227B (Fam227b).